Here is a 145-residue protein sequence, read N- to C-terminus: D-aminoacyl-tRNA deacylase (145 aa).

The Gly-cisPro motif, important for rejection of L-amino acids signature appears at 137-138; sequence GP.

It belongs to the DTD family. In terms of assembly, homodimer.

The protein localises to the cytoplasm. The catalysed reaction is glycyl-tRNA(Ala) + H2O = tRNA(Ala) + glycine + H(+). It catalyses the reaction a D-aminoacyl-tRNA + H2O = a tRNA + a D-alpha-amino acid + H(+). Its function is as follows. An aminoacyl-tRNA editing enzyme that deacylates mischarged D-aminoacyl-tRNAs. Also deacylates mischarged glycyl-tRNA(Ala), protecting cells against glycine mischarging by AlaRS. Acts via tRNA-based rather than protein-based catalysis; rejects L-amino acids rather than detecting D-amino acids in the active site. By recycling D-aminoacyl-tRNA to D-amino acids and free tRNA molecules, this enzyme counteracts the toxicity associated with the formation of D-aminoacyl-tRNA entities in vivo and helps enforce protein L-homochirality. In Proteus mirabilis (strain HI4320), this protein is D-aminoacyl-tRNA deacylase.